The following is a 208-amino-acid chain: ATP-dependent Clp protease proteolytic subunit (208 aa).

Ser101 acts as the Nucleophile in catalysis. The active site involves His126.

It belongs to the peptidase S14 family. As to quaternary structure, component of the chloroplastic Clp protease core complex.

The protein localises to the plastid. It is found in the chloroplast stroma. It carries out the reaction Hydrolysis of proteins to small peptides in the presence of ATP and magnesium. alpha-casein is the usual test substrate. In the absence of ATP, only oligopeptides shorter than five residues are hydrolyzed (such as succinyl-Leu-Tyr-|-NHMec, and Leu-Tyr-Leu-|-Tyr-Trp, in which cleavage of the -Tyr-|-Leu- and -Tyr-|-Trp bonds also occurs).. Its function is as follows. Cleaves peptides in various proteins in a process that requires ATP hydrolysis. Has a chymotrypsin-like activity. Plays a major role in the degradation of misfolded proteins. In Nephroselmis olivacea (Green alga), this protein is ATP-dependent Clp protease proteolytic subunit.